Here is a 281-residue protein sequence, read N- to C-terminus: MAIKKFKAYTNGRRNMSSLDYQANLTGHAPEKSLLVALPTKAGRNNQGKITTRHQGGRLKRFYRIIDFKRQKDGIPATVKTIEYDPNRSANISLVVYRDGEKRYILSPKGIKIGQVILSGDNVDIQVGNHLPLANIPEGTFVHNIELQPRQGGIIARSAGSSAQILGKDESGRYVILRLKSGEVRKVLAINRATVGEVGNEEHSLVNIGKAGRNRLRGIRPTVRGSAMNPNDHPHGGGEGRQPIGRKSPMTPWGKRALGVKTRATKKASNQFIIRRRKETK.

A disordered region spans residues threonine 222 to lysine 281.

It belongs to the universal ribosomal protein uL2 family. As to quaternary structure, part of the 50S ribosomal subunit. Forms a bridge to the 30S subunit in the 70S ribosome.

In terms of biological role, one of the primary rRNA binding proteins. Required for association of the 30S and 50S subunits to form the 70S ribosome, for tRNA binding and peptide bond formation. It has been suggested to have peptidyltransferase activity; this is somewhat controversial. Makes several contacts with the 16S rRNA in the 70S ribosome. The polypeptide is Large ribosomal subunit protein uL2 (Metamycoplasma hominis (strain ATCC 23114 / DSM 25592 / NBRC 14850 / NCTC 10111 / PG21) (Mycoplasma hominis)).